We begin with the raw amino-acid sequence, 128 residues long: MTTDKDKMAVGRLKSRPQFLAVRAGESRRGPLFLLEVLDRNDPEGEARVGFTVTKKHGNAVERNRMRRRLKEAVRLSAGFAMKPGHDYVIVARRDLLNAPFDALTRALRDRIENKPKQKRPPAGSRKS.

The protein belongs to the RnpA family. As to quaternary structure, consists of a catalytic RNA component (M1 or rnpB) and a protein subunit.

It catalyses the reaction Endonucleolytic cleavage of RNA, removing 5'-extranucleotides from tRNA precursor.. In terms of biological role, RNaseP catalyzes the removal of the 5'-leader sequence from pre-tRNA to produce the mature 5'-terminus. It can also cleave other RNA substrates such as 4.5S RNA. The protein component plays an auxiliary but essential role in vivo by binding to the 5'-leader sequence and broadening the substrate specificity of the ribozyme. This is Ribonuclease P protein component from Rhizobium meliloti (strain 1021) (Ensifer meliloti).